The primary structure comprises 604 residues: Deuterosome assembly protein 1 (604 aa).

Coiled coils occupy residues 14-59 (CEAE…NAQT), 85-197 (MTQN…GKKQ), 226-278 (IIEK…ELQS), and 336-399 (QDQP…KQLK). Ser-547 carries the phosphoserine modification. A coiled-coil region spans residues 558 to 601 (AAQHFLLEEEKRAKELEKLLNTHIDELQRHTEFTLNKYSKLKQN).

This sequence belongs to the CEP63 family. Interacts with CEP152; the interaction is mutually exclusive with CEP63.

The protein localises to the cytoplasm. Key structural component of the deuterosome, a structure that promotes de novo centriole amplification in multiciliated cells. Deuterosome-mediated centriole amplification occurs in terminally differentiated multiciliated cells and can generate more than 100 centrioles. Probably sufficient for the specification and formation of the deuterosome inner core. Interacts with CEP152 and recruits PLK4 to activate centriole biogenesis. The sequence is that of Deuterosome assembly protein 1 from Homo sapiens (Human).